Consider the following 307-residue polypeptide: Acetaldehyde dehydrogenase 2 (307 aa).

The active-site Acyl-thioester intermediate is the Cys131. NAD(+) is bound by residues Ser162–Asn170 and Asn273.

Belongs to the acetaldehyde dehydrogenase family.

It catalyses the reaction acetaldehyde + NAD(+) + CoA = acetyl-CoA + NADH + H(+). This is Acetaldehyde dehydrogenase 2 (aphF) from Comamonas testosteroni (Pseudomonas testosteroni).